The following is a 187-amino-acid chain: Phosphatidylethanolamine-binding protein 1 (187 aa).

Position 2 is an N-acetylalanine; in peptide hippocampal cholinergic neurostimulating (A2). S6 is subject to Phosphoserine. T42 bears the Phosphothreonine mark. Residues S51, S52, S54, S98, and S132 each carry the phosphoserine modification. Residues 93–134 form an interaction with RAF1 region; the sequence is KGNDISSGTVLSDYVGSGPPSGTGLHRYVWLVYEQEQPLSCD.

It belongs to the phosphatidylethanolamine-binding protein family. Has a tendency to form dimers by disulfide cross-linking. Interacts with RAF1 and this interaction is enhanced if RAF1 is phosphorylated on residues 'Ser-338', 'Ser-339', 'Tyr-340' and 'Tyr-341'. Interacts with ALOX15; in response to IL13/interleukin-13, prevents the interaction of PEBP1 with RAF1 to activate the ERK signaling cascade. HCNP is expressed in brain. Increased expression in aged senescence-accelerated mice.

The protein resides in the cytoplasm. Its function is as follows. Binds ATP, opioids and phosphatidylethanolamine. Has lower affinity for phosphatidylinositol and phosphatidylcholine. Serine protease inhibitor which inhibits thrombin, neuropsin and chymotrypsin but not trypsin, tissue type plasminogen activator and elastase. Inhibits the kinase activity of RAF1 by inhibiting its activation and by dissociating the RAF1/MEK complex and acting as a competitive inhibitor of MEK phosphorylation. Functionally, HCNP may be involved in the function of the presynaptic cholinergic neurons of the central nervous system. HCNP increases the production of choline acetyltransferase but not acetylcholinesterase. Seems to be mediated by a specific receptor. The protein is Phosphatidylethanolamine-binding protein 1 (Pebp1) of Mus musculus (Mouse).